The chain runs to 843 residues: Protein P (843 aa).

Residues 1–177 form a terminal protein domain (TP) region; sequence MPLSYQHFRK…FCGSPYSWEQ (177 aa). A spacer region spans residues 178 to 346; sequence ELQHGRLVFQ…YCLSHLINLH (169 aa). Disordered stretches follow at residues 218–243 and 291–315; these read LKQS…SGSI and TAQR…AGSQ. A polymerase/reverse transcriptase domain (RT) region spans residues 347 to 690; the sequence is EDWGPCIEHG…YLNLYPVARQ (344 aa). The Reverse transcriptase domain maps to 357–600; that stretch reads EHNIRIPRTP…YSLNFMGYVI (244 aa). Mg(2+) is bound by residues D429, D551, and D552.

This sequence belongs to the hepadnaviridae P protein family.

It catalyses the reaction DNA(n) + a 2'-deoxyribonucleoside 5'-triphosphate = DNA(n+1) + diphosphate. The enzyme catalyses Endonucleolytic cleavage to 5'-phosphomonoester.. With respect to regulation, activated by host HSP70 and HSP40 in vitro to be able to bind the epsilon loop of the pgRNA. Because deletion of the RNase H region renders the protein partly chaperone-independent, the chaperones may be needed indirectly to relieve occlusion of the RNA-binding site by this domain. Inhibited by several reverse-transcriptase inhibitors: Lamivudine, Adefovir and Entecavir. Multifunctional enzyme that converts the viral RNA genome into dsDNA in viral cytoplasmic capsids. This enzyme displays a DNA polymerase activity that can copy either DNA or RNA templates, and a ribonuclease H (RNase H) activity that cleaves the RNA strand of RNA-DNA heteroduplexes in a partially processive 3'- to 5'-endonucleasic mode. Neo-synthesized pregenomic RNA (pgRNA) are encapsidated together with the P protein, and reverse-transcribed inside the nucleocapsid. Initiation of reverse-transcription occurs first by binding the epsilon loop on the pgRNA genome, and is initiated by protein priming, thereby the 5'-end of (-)DNA is covalently linked to P protein. Partial (+)DNA is synthesized from the (-)DNA template and generates the relaxed circular DNA (RC-DNA) genome. After budding and infection, the RC-DNA migrates in the nucleus, and is converted into a plasmid-like covalently closed circular DNA (cccDNA). The activity of P protein does not seem to be necessary for cccDNA generation, and is presumably released from (+)DNA by host nuclear DNA repair machinery. This chain is Protein P, found in Hepatitis B virus genotype C subtype ayw (isolate Australia/AustRC/1992) (HBV-C).